The following is a 165-amino-acid chain: Putative pre-16S rRNA nuclease (165 aa).

The protein belongs to the YqgF nuclease family.

It is found in the cytoplasm. Its function is as follows. Could be a nuclease involved in processing of the 5'-end of pre-16S rRNA. This Rhizobium meliloti (strain 1021) (Ensifer meliloti) protein is Putative pre-16S rRNA nuclease.